The chain runs to 505 residues: Trans-cinnamate 4-monooxygenase (505 aa).

Residues 3–23 (LLLLEKTLLGSFVAILVAILV) form a helical membrane-spanning segment. (E)-cinnamate-binding positions include 213–218 (RSRLAQ) and A306. A heme-binding site is contributed by C447.

Belongs to the cytochrome P450 family. It depends on heme as a cofactor.

The protein resides in the membrane. The enzyme catalyses (E)-cinnamate + reduced [NADPH--hemoprotein reductase] + O2 = (E)-4-coumarate + oxidized [NADPH--hemoprotein reductase] + H2O + H(+). It participates in phenylpropanoid metabolism; trans-4-coumarate biosynthesis; trans-4-coumarate from trans-cinnamate: step 1/1. Functionally, catalyzes the first oxidative step of the phenylpropanoid pathway in higher plants by transforming trans-cinnamate into p-coumarate. The compounds formed by this pathway are essential components for lignification, pollination, and defense against ultraviolet light, predators and pathogens. The chain is Trans-cinnamate 4-monooxygenase (CYP73A13) from Populus tremuloides (Quaking aspen).